The chain runs to 373 residues: 4-hydroxy-3-methylbut-2-en-1-yl diphosphate synthase (flavodoxin) (373 aa).

4 residues coordinate [4Fe-4S] cluster: Cys268, Cys271, Cys303, and Glu310.

Belongs to the IspG family. [4Fe-4S] cluster serves as cofactor.

It carries out the reaction (2E)-4-hydroxy-3-methylbut-2-enyl diphosphate + oxidized [flavodoxin] + H2O + 2 H(+) = 2-C-methyl-D-erythritol 2,4-cyclic diphosphate + reduced [flavodoxin]. Its pathway is isoprenoid biosynthesis; isopentenyl diphosphate biosynthesis via DXP pathway; isopentenyl diphosphate from 1-deoxy-D-xylulose 5-phosphate: step 5/6. Converts 2C-methyl-D-erythritol 2,4-cyclodiphosphate (ME-2,4cPP) into 1-hydroxy-2-methyl-2-(E)-butenyl 4-diphosphate. This Exiguobacterium sp. (strain ATCC BAA-1283 / AT1b) protein is 4-hydroxy-3-methylbut-2-en-1-yl diphosphate synthase (flavodoxin).